The primary structure comprises 276 residues: Formamidopyrimidine-DNA glycosylase (276 aa).

Residue Pro-2 is the Schiff-base intermediate with DNA of the active site. Residue Glu-3 is the Proton donor of the active site. Lys-58 functions as the Proton donor; for beta-elimination activity in the catalytic mechanism. Residues His-94, Arg-112, and Arg-157 each contribute to the DNA site. An FPG-type zinc finger spans residues 242-276 (FVYDRAGLPCRVCGTPIKQIVQGQRSTYFCPTCQR). Catalysis depends on Arg-266, which acts as the Proton donor; for delta-elimination activity.

Belongs to the FPG family. As to quaternary structure, monomer. Requires Zn(2+) as cofactor.

It catalyses the reaction Hydrolysis of DNA containing ring-opened 7-methylguanine residues, releasing 2,6-diamino-4-hydroxy-5-(N-methyl)formamidopyrimidine.. The catalysed reaction is 2'-deoxyribonucleotide-(2'-deoxyribose 5'-phosphate)-2'-deoxyribonucleotide-DNA = a 3'-end 2'-deoxyribonucleotide-(2,3-dehydro-2,3-deoxyribose 5'-phosphate)-DNA + a 5'-end 5'-phospho-2'-deoxyribonucleoside-DNA + H(+). Its function is as follows. Involved in base excision repair of DNA damaged by oxidation or by mutagenic agents. Acts as a DNA glycosylase that recognizes and removes damaged bases. Has a preference for oxidized purines, such as 7,8-dihydro-8-oxoguanine (8-oxoG). Has AP (apurinic/apyrimidinic) lyase activity and introduces nicks in the DNA strand. Cleaves the DNA backbone by beta-delta elimination to generate a single-strand break at the site of the removed base with both 3'- and 5'-phosphates. This Paraburkholderia phytofirmans (strain DSM 17436 / LMG 22146 / PsJN) (Burkholderia phytofirmans) protein is Formamidopyrimidine-DNA glycosylase.